Here is a 518-residue protein sequence, read N- to C-terminus: Bifunctional purine biosynthesis protein PurH (518 aa).

In terms of domain architecture, MGS-like spans 1 to 144 (MSKRALISVS…KNHAAVTVVC (144 aa)).

This sequence belongs to the PurH family.

The catalysed reaction is (6R)-10-formyltetrahydrofolate + 5-amino-1-(5-phospho-beta-D-ribosyl)imidazole-4-carboxamide = 5-formamido-1-(5-phospho-D-ribosyl)imidazole-4-carboxamide + (6S)-5,6,7,8-tetrahydrofolate. It carries out the reaction IMP + H2O = 5-formamido-1-(5-phospho-D-ribosyl)imidazole-4-carboxamide. Its pathway is purine metabolism; IMP biosynthesis via de novo pathway; 5-formamido-1-(5-phospho-D-ribosyl)imidazole-4-carboxamide from 5-amino-1-(5-phospho-D-ribosyl)imidazole-4-carboxamide (10-formyl THF route): step 1/1. It participates in purine metabolism; IMP biosynthesis via de novo pathway; IMP from 5-formamido-1-(5-phospho-D-ribosyl)imidazole-4-carboxamide: step 1/1. This chain is Bifunctional purine biosynthesis protein PurH, found in Lactococcus lactis subsp. cremoris (strain SK11).